The following is a 339-amino-acid chain: MSSSWDIRVTDTSLRDGSHHKRHQFTGDEVRAIVGALDSAGVPVIEVTHGDGLGGSSFNYGFSKVPEQELISIAVDTARNAKIAFLMLPGLGIKDDIIVAQDNGASICRIATHCTEADVSIQHFGLARDRGLETVGFLMMAHSIPPEKLARQARIMADAGCQCVYVVDSAGALVLEQVSDRVEALVQELGADAQVGFHGHENLGLGVANSIAAVRAGAKQIDGSTRRFGAGAGNAPVEAFVGVCDKIGVKTGIDFFAIADAAEDVVRPAMPAECLLDRQALMMGYAGVYSSFLKHAERQAERYGVSSAELLVRAGKRKLVGGQEDQLIDIALELQREHL.

Residues 7–259 (IRVTDTSLRD…KTGIDFFAIA (253 aa)) enclose the Pyruvate carboxyltransferase domain. 15–16 (RD) serves as a coordination point for substrate. D16 is a Mn(2+) binding site. The active-site Proton acceptor is H19. Positions 169 and 198 each coordinate substrate. Mn(2+) is bound by residues H198 and H200. Y289 contacts substrate.

Belongs to the 4-hydroxy-2-oxovalerate aldolase family.

The enzyme catalyses (S)-4-hydroxy-2-oxopentanoate = acetaldehyde + pyruvate. This chain is 4-hydroxy-2-oxovalerate aldolase 3, found in Rhodococcus opacus (strain B4).